A 361-amino-acid polypeptide reads, in one-letter code: Myb/SANT-like DNA-binding domain-containing protein 7 (361 aa).

The region spanning 11 to 70 (RWSRQETRTLLSILGEAEYIQRLQTVHHNADVYQAVSKRMQQEGFRRTERQCRSKFKVLK) is the Myb-like domain. Disordered regions lie at residues 174–198 (TSDL…SYSS) and 217–272 (RLGV…ARRR). 2 stretches are compositionally biased toward polar residues: residues 187-198 (AGCSQGTPSYSS) and 226-249 (PCTS…SSSR).

This is Myb/SANT-like DNA-binding domain-containing protein 7 from Homo sapiens (Human).